Consider the following 178-residue polypeptide: Large ribosomal subunit protein uL6 (178 aa).

This sequence belongs to the universal ribosomal protein uL6 family. In terms of assembly, part of the 50S ribosomal subunit.

In terms of biological role, this protein binds to the 23S rRNA, and is important in its secondary structure. It is located near the subunit interface in the base of the L7/L12 stalk, and near the tRNA binding site of the peptidyltransferase center. This chain is Large ribosomal subunit protein uL6, found in Clavibacter sepedonicus (Clavibacter michiganensis subsp. sepedonicus).